The chain runs to 105 residues: Large ribosomal subunit protein eL42 (105 aa).

The segment at 23 to 61 (KVTQYKKGKESKFAQGRRRYDRKQSGFGGQTKPIFRKKA) is disordered.

Belongs to the eukaryotic ribosomal protein eL42 family.

In Caenorhabditis elegans, this protein is Large ribosomal subunit protein eL42.